Here is a 238-residue protein sequence, read N- to C-terminus: Ribonuclease PH (238 aa).

Residues Arg-86 and 124–126 (GTR) contribute to the phosphate site.

Belongs to the RNase PH family. As to quaternary structure, homohexameric ring arranged as a trimer of dimers.

It catalyses the reaction tRNA(n+1) + phosphate = tRNA(n) + a ribonucleoside 5'-diphosphate. In terms of biological role, phosphorolytic 3'-5' exoribonuclease that plays an important role in tRNA 3'-end maturation. Removes nucleotide residues following the 3'-CCA terminus of tRNAs; can also add nucleotides to the ends of RNA molecules by using nucleoside diphosphates as substrates, but this may not be physiologically important. Probably plays a role in initiation of 16S rRNA degradation (leading to ribosome degradation) during starvation. This is Ribonuclease PH from Citrobacter koseri (strain ATCC BAA-895 / CDC 4225-83 / SGSC4696).